The sequence spans 376 residues: GDSL esterase/lipase 2 (376 aa).

A signal peptide spans 1–25 (MENSRSTLIIFFAYTTIILIGSINC). Residue N36 is glycosylated (N-linked (GlcNAc...) asparagine). S46 acts as the Nucleophile in catalysis. N-linked (GlcNAc...) asparagine glycosylation is found at N186 and N205. Active-site residues include D340 and H343. A glycan (N-linked (GlcNAc...) asparagine) is linked at N362.

It belongs to the 'GDSL' lipolytic enzyme family. In terms of tissue distribution, expressed seedlings, roots and stems.

It localises to the secreted. In terms of biological role, involved in the resistance to the necrotropic bacteria Erwinia carotovora, probably via negative regulation of auxin signaling. Possesses lipase and antimicrobial activities, inhibiting germination of fungal spores (e.g. Alternaria brassicicola). The chain is GDSL esterase/lipase 2 (GLIP2) from Arabidopsis thaliana (Mouse-ear cress).